The following is a 327-amino-acid chain: L-lactate dehydrogenase 1 (327 aa).

NAD(+) contacts are provided by residues Val21, Asp42, Lys47, Tyr72, and 86–87 (GA). Substrate-binding positions include Gln89, Arg95, and 127-130 (NPVD). NAD(+) is bound by residues 125–127 (AAN) and Ser150. A substrate-binding site is contributed by 155–158 (DSAR). Beta-D-fructose 1,6-bisphosphate is bound by residues Arg160 and His175. Residue His182 is the Proton acceptor of the active site. A Phosphotyrosine modification is found at Tyr227. Residue Thr236 participates in substrate binding.

Belongs to the LDH/MDH superfamily. LDH family. Homotetramer.

The protein resides in the cytoplasm. The catalysed reaction is (S)-lactate + NAD(+) = pyruvate + NADH + H(+). It participates in fermentation; pyruvate fermentation to lactate; (S)-lactate from pyruvate: step 1/1. Its activity is regulated as follows. Allosterically activated by fructose 1,6-bisphosphate (FBP). Its function is as follows. Catalyzes the conversion of lactate to pyruvate. This is L-lactate dehydrogenase 1 from Enterococcus faecalis (strain ATCC 700802 / V583).